The primary structure comprises 431 residues: Ribosomal protein uS12 methylthiotransferase RimO (431 aa).

Residues 4 to 120 (LKLYVIVLGC…LAESINKTKK (117 aa)) form the MTTase N-terminal domain. Cys-13, Cys-49, Cys-83, Cys-150, Cys-154, and Cys-157 together coordinate [4Fe-4S] cluster. One can recognise a Radical SAM core domain in the interval 136-365 (DSDLPYAYVK…MEVQAEISFL (230 aa)). Positions 368–431 (QRLVGKVIDV…TYDLEGELVE (64 aa)) constitute a TRAM domain.

This sequence belongs to the methylthiotransferase family. RimO subfamily. The cofactor is [4Fe-4S] cluster.

It is found in the cytoplasm. It catalyses the reaction L-aspartate(89)-[ribosomal protein uS12]-hydrogen + (sulfur carrier)-SH + AH2 + 2 S-adenosyl-L-methionine = 3-methylsulfanyl-L-aspartate(89)-[ribosomal protein uS12]-hydrogen + (sulfur carrier)-H + 5'-deoxyadenosine + L-methionine + A + S-adenosyl-L-homocysteine + 2 H(+). Functionally, catalyzes the methylthiolation of an aspartic acid residue of ribosomal protein uS12. This Fervidobacterium nodosum (strain ATCC 35602 / DSM 5306 / Rt17-B1) protein is Ribosomal protein uS12 methylthiotransferase RimO.